Reading from the N-terminus, the 226-residue chain is MAPTISKRIKTLSVSRPIIYGNTAKKMGSVKPPNAPAEHTHLWTIFVRGPQNEDISYFIKKVVFKLHDTYPNPVRSIEAPPFELTETGWGEFDINIKVYFVEEANEKVLNFYHRLRLHPYANPVPNSDNGNEQNTTDHNSKDAEVSSVYFDEIVFNEPNEEFFKILMSRPGNLLPSNKTDDCVYSKQLEQEEIDRIEIGIEKVDKEIDELKQKLENLVKQEAINGS.

One can recognise a YEATS domain in the interval 8 to 169 (RIKTLSVSRP…EEFFKILMSR (162 aa)). Residues 187-224 (QLEQEEIDRIEIGIEKVDKEIDELKQKLENLVKQEAIN) are a coiled coil.

As to quaternary structure, component of the SWR1 chromatin-remodeling complex composed of at least ACT1, ARP4, RVB1, RVB2, ARP6, YAF9, VPS71, VPS72, SWC3, SWC4, SWC5, SWC7 and SWR1, and perhaps BDF1. Component of the NuA4 histone acetyltransferase complex composed of at least ACT1, ARP4, YAF9, VID21, SWC4, EAF3, EAF5, EAF6, EAF7, EPL1, ESA1, TRA1 and YNG2. Interacts with SWC4.

It is found in the cytoplasm. The protein localises to the nucleus. Component of the SWR1 complex which mediates the ATP-dependent exchange of histone H2A for the H2A variant HZT1 leading to transcriptional regulation of selected genes by chromatin remodeling. Component of the NuA4 histone acetyltransferase complex which is involved in transcriptional activation of selected genes principally by acetylation of nucleosomal histones H4 and H2A. The NuA4 complex is also involved in DNA repair. Yaf9 may also be required for viability in conditions in which the structural integrity of the spindle is compromised. This is Protein AF-9 homolog (YAF9) from Saccharomyces cerevisiae (strain ATCC 204508 / S288c) (Baker's yeast).